The primary structure comprises 82 residues: Small ribosomal subunit protein bS16 (82 aa).

The protein belongs to the bacterial ribosomal protein bS16 family.

The protein is Small ribosomal subunit protein bS16 of Bdellovibrio bacteriovorus (strain ATCC 15356 / DSM 50701 / NCIMB 9529 / HD100).